A 274-amino-acid chain; its full sequence is Centromere protein K (274 aa).

The disordered stretch occupies residues 1–21 (MSGYQHELPPNISKTSPAPEE). A coiled-coil region spans residues 96-159 (KEELEKIAQE…NQLTAFSEKR (64 aa)).

Belongs to the CENP-K/MCM22 family.

The protein localises to the nucleus. Its subcellular location is the chromosome. It is found in the centromere. It localises to the kinetochore. In terms of biological role, probable component of a centromeric complex involved in assembly of kinetochore proteins, mitotic progression and chromosome segregation. The chain is Centromere protein K (cenpk) from Xenopus laevis (African clawed frog).